A 177-amino-acid polypeptide reads, in one-letter code: Large ribosomal subunit protein bL9 (177 aa).

The interval 151-177 is disordered; that stretch reads VEEEPAEEVEAPAETEVAEDAEEATEA.

It belongs to the bacterial ribosomal protein bL9 family.

Binds to the 23S rRNA. The polypeptide is Large ribosomal subunit protein bL9 (Maridesulfovibrio salexigens (strain ATCC 14822 / DSM 2638 / NCIMB 8403 / VKM B-1763) (Desulfovibrio salexigens)).